Consider the following 405-residue polypeptide: Acetate kinase (405 aa).

Asn13 is a binding site for Mg(2+). Lys20 is an ATP binding site. Arg94 provides a ligand contact to substrate. Asp153 acts as the Proton donor/acceptor in catalysis. ATP-binding positions include 213–217 (HLGNG), 288–290 (DFR), and 336–340 (GIGEN). Glu390 contacts Mg(2+).

This sequence belongs to the acetokinase family. As to quaternary structure, homodimer. It depends on Mg(2+) as a cofactor. Mn(2+) serves as cofactor.

The protein resides in the cytoplasm. It carries out the reaction acetate + ATP = acetyl phosphate + ADP. It participates in metabolic intermediate biosynthesis; acetyl-CoA biosynthesis; acetyl-CoA from acetate: step 1/2. Its function is as follows. Catalyzes the formation of acetyl phosphate from acetate and ATP. Can also catalyze the reverse reaction. This chain is Acetate kinase, found in Buchnera aphidicola subsp. Acyrthosiphon pisum (strain APS) (Acyrthosiphon pisum symbiotic bacterium).